Reading from the N-terminus, the 456-residue chain is MKKLLFITAPLLLSVLTASCSKSNVPPPTPLAEKPPRETFVKVIWKRKTGNGNGGLANYNVAPAYANDTVFVPNQNGMAYALAITNGKIIWKNDTGTNLSVQPNTIANAVIFGSIKGTLTAIDDKDGQTLWRTDAPSSIFSQPTIYDNSIYLQTHDGSVSAFDARNGSKEWSVANNIPEITLPSNSSPIILNNTVMIGNAFGAVLGFTIKSGDRTINIPIAISHGSSPADKMVDITANPMLYDHYLIFAAYQGAIVALDKDSGKMLWAKKASIINNMAINNGVIFTTQDDSELKAYNIQTGDTVWTQDTLKWRKITAPIYYKGLIVVADYQGYLHFFNSLNGEYLGRYKLTSKSDIFDYGISGQLVPTEKGIIIEADNGTTYLVDAYSNKVIYDSILSDYQVDKGKSVARIYPLEQDKPTKATAPLATKTTQTTETKSKGINATIIIGDFSKGKPS.

Residues 1–19 (MKKLLFITAPLLLSVLTAS) form the signal peptide. C20 carries the N-palmitoyl cysteine lipid modification. Residue C20 is the site of S-diacylglycerol cysteine attachment.

Belongs to the BamB family. As to quaternary structure, part of the Bam complex.

Its subcellular location is the cell outer membrane. Functionally, part of the outer membrane protein assembly complex, which is involved in assembly and insertion of beta-barrel proteins into the outer membrane. In Francisella tularensis subsp. tularensis (strain SCHU S4 / Schu 4), this protein is Outer membrane protein assembly factor BamB.